Reading from the N-terminus, the 407-residue chain is Imidazolonepropionase (407 aa).

Fe(3+) is bound by residues His-74 and His-76. Zn(2+) is bound by residues His-74 and His-76. 4-imidazolone-5-propanoate-binding residues include Arg-83, Tyr-146, and His-179. Tyr-146 is an N-formimidoyl-L-glutamate binding site. Fe(3+) is bound at residue His-244. Position 244 (His-244) interacts with Zn(2+). Gln-247 provides a ligand contact to 4-imidazolone-5-propanoate. Residue Asp-319 coordinates Fe(3+). Asp-319 is a binding site for Zn(2+). Asn-321 and Gly-323 together coordinate N-formimidoyl-L-glutamate. Position 324 (Thr-324) interacts with 4-imidazolone-5-propanoate.

Belongs to the metallo-dependent hydrolases superfamily. HutI family. Zn(2+) is required as a cofactor. The cofactor is Fe(3+).

It localises to the cytoplasm. The enzyme catalyses 4-imidazolone-5-propanoate + H2O = N-formimidoyl-L-glutamate. Its pathway is amino-acid degradation; L-histidine degradation into L-glutamate; N-formimidoyl-L-glutamate from L-histidine: step 3/3. Its function is as follows. Catalyzes the hydrolytic cleavage of the carbon-nitrogen bond in imidazolone-5-propanoate to yield N-formimidoyl-L-glutamate. It is the third step in the universal histidine degradation pathway. This Salmonella arizonae (strain ATCC BAA-731 / CDC346-86 / RSK2980) protein is Imidazolonepropionase.